The primary structure comprises 172 residues: MRNLILVGPMGAGKSTIGRLLAKELRLLFKDSDKEIELRTGANIPWIFDKEGEPGFREREQAMIAELCALDGVVLATGGGAVMRDANRAALRAGGRVVYLHASVEQQVGRTSRDRNRPLLRTANPEATLRALFEARDPLYREIADLVVETDERPPRMVVLDILERLQQLPPR.

11–16 contacts ATP; sequence GAGKST. S15 contributes to the Mg(2+) binding site. Substrate contacts are provided by D33, R57, and G79. Position 117 (R117) interacts with ATP. A substrate-binding site is contributed by R136. Residue R153 coordinates ATP.

It belongs to the shikimate kinase family. As to quaternary structure, monomer. It depends on Mg(2+) as a cofactor.

Its subcellular location is the cytoplasm. The enzyme catalyses shikimate + ATP = 3-phosphoshikimate + ADP + H(+). It participates in metabolic intermediate biosynthesis; chorismate biosynthesis; chorismate from D-erythrose 4-phosphate and phosphoenolpyruvate: step 5/7. Its function is as follows. Catalyzes the specific phosphorylation of the 3-hydroxyl group of shikimic acid using ATP as a cosubstrate. The chain is Shikimate kinase from Pseudomonas entomophila (strain L48).